Here is a 394-residue protein sequence, read N- to C-terminus: Metal tolerance protein 11 (394 aa).

Over 1–103 (MVEPASPDSD…EQDNLAKSET (103 aa)) the chain is Cytoplasmic. The helical transmembrane segment at 104–124 (LAIRISNIANMLLFAAKVYAS) threads the bilayer. Topologically, residues 125–130 (VTSGSL) are vacuolar. A helical transmembrane segment spans residues 131-151 (AIIASTLDSLLDLLSGFILWF). Over 152 to 172 (TAFSMQTPNPYQYPIGKKRMQ) the chain is Cytoplasmic. The chain crosses the membrane as a helical span at residues 173–193 (PLGILVFASVMATLGLQIILE). Over 194–212 (SLRTMLSSHKEFNLTKEQE) the chain is Vacuolar. The chain crosses the membrane as a helical span at residues 213 to 233 (SWVVGIMLSVTLVKLLLVLYC). The Cytoplasmic portion of the chain corresponds to 234–251 (RSFTNEIVKAYAQDHFFD). A helical transmembrane segment spans residues 252 to 272 (VITNIIGLIAVILANYIDYWI). Residue aspartate 273 is a topological domain, vacuolar. A helical membrane pass occupies residues 274–294 (PVGAIILALYTIRTWSMTVLE). Residues 295–394 (NVNSLVGKSA…HKPEHARSHC (100 aa)) are Cytoplasmic-facing.

Belongs to the cation diffusion facilitator (CDF) transporter (TC 2.A.4) family. SLC30A subfamily. In terms of tissue distribution, widely expressed.

Its subcellular location is the prevacuolar compartment membrane. It localises to the golgi apparatus membrane. In terms of biological role, cation/proton antiporter involved in endogenous manganese tolerance probably through vesicular trafficking and exocytosis. The protein is Metal tolerance protein 11 (MTP11) of Arabidopsis thaliana (Mouse-ear cress).